The chain runs to 192 residues: Casparian strip membrane protein 1 (192 aa).

The Cytoplasmic portion of the chain corresponds to 1-30 (MSTTVDVPESSNVAKGKAIAVARPGGWKKG). A helical transmembrane segment spans residues 31-51 (LAIMDFILRLGGIAASLGAAA). Residues 52 to 80 (TMGTSDQTLPFFTQFFQFEASYDSFTTFQ) lie on the Extracellular side of the membrane. The chain crosses the membrane as a helical span at residues 81–101 (FFVITMALVAGYLVLSLPFSV). The Cytoplasmic segment spans residues 102-113 (VAIIRPHAPGPR). A helical membrane pass occupies residues 114 to 134 (LFLIILDTVFLTLATASGASA). Residues 135–166 (AAIVYLAHNGNQDSNWLAICNQFGDFCAQTSG) lie on the Extracellular side of the membrane. Residues 167 to 187 (AVVASFVAVVILVLLVIMSAL) form a helical membrane-spanning segment. Over 188–192 (ALRRH) the chain is Cytoplasmic.

Belongs to the Casparian strip membrane proteins (CASP) family. As to quaternary structure, homodimer and heterodimers.

The protein localises to the cell membrane. Functionally, regulates membrane-cell wall junctions and localized cell wall deposition. Required for establishment of the Casparian strip membrane domain (CSD) and the subsequent formation of Casparian strips, a cell wall modification of the root endodermis that determines an apoplastic barrier between the intraorganismal apoplasm and the extraorganismal apoplasm and prevents lateral diffusion. This chain is Casparian strip membrane protein 1, found in Vigna unguiculata (Cowpea).